The chain runs to 230 residues: 5'-methylthioadenosine/S-adenosylhomocysteine nucleosidase (230 aa).

The active-site Proton acceptor is the E12. Substrate contacts are provided by residues G78, I153, and 174–175 (ME). Residue D198 is the Proton donor of the active site.

Belongs to the PNP/UDP phosphorylase family. MtnN subfamily.

It catalyses the reaction S-adenosyl-L-homocysteine + H2O = S-(5-deoxy-D-ribos-5-yl)-L-homocysteine + adenine. The catalysed reaction is S-methyl-5'-thioadenosine + H2O = 5-(methylsulfanyl)-D-ribose + adenine. It carries out the reaction 5'-deoxyadenosine + H2O = 5-deoxy-D-ribose + adenine. It functions in the pathway amino-acid biosynthesis; L-methionine biosynthesis via salvage pathway; S-methyl-5-thio-alpha-D-ribose 1-phosphate from S-methyl-5'-thioadenosine (hydrolase route): step 1/2. Catalyzes the irreversible cleavage of the glycosidic bond in both 5'-methylthioadenosine (MTA) and S-adenosylhomocysteine (SAH/AdoHcy) to adenine and the corresponding thioribose, 5'-methylthioribose and S-ribosylhomocysteine, respectively. Also cleaves 5'-deoxyadenosine, a toxic by-product of radical S-adenosylmethionine (SAM) enzymes, into 5-deoxyribose and adenine. The sequence is that of 5'-methylthioadenosine/S-adenosylhomocysteine nucleosidase from Shewanella denitrificans (strain OS217 / ATCC BAA-1090 / DSM 15013).